The primary structure comprises 714 residues: Structure-specific endonuclease subunit SLX4 2 (714 aa).

2 stretches are compositionally biased toward basic and acidic residues: residues 1-14 and 24-34; these read MSPEGEESHAEDNL and IHEETLAEESH. Disordered regions lie at residues 1–114 and 338–369; these read MSPE…EQQG and SSGPVNDKQPSVASETVESDSTPIVSPVKTPQ. Over residues 36–46 the composition is skewed to polar residues; that stretch reads QAIQRSISRLS. Basic residues predominate over residues 79–92; that stretch reads KTKKRKLKVSKPRK.

The protein belongs to the SLX4 family. Forms a heterodimer with SLX1. In terms of processing, phosphorylated in response to DNA damage.

It is found in the nucleus. Regulatory subunit of the SLX1-SLX4 structure-specific endonuclease that resolves DNA secondary structures generated during DNA repair and recombination. Has endonuclease activity towards branched DNA substrates, introducing single-strand cuts in duplex DNA close to junctions with ss-DNA. This Candida tropicalis (strain ATCC MYA-3404 / T1) (Yeast) protein is Structure-specific endonuclease subunit SLX4 2.